The primary structure comprises 152 residues: Large ribosomal subunit protein bL9 (152 aa).

It belongs to the bacterial ribosomal protein bL9 family.

Its function is as follows. Binds to the 23S rRNA. The protein is Large ribosomal subunit protein bL9 of Mycobacterium bovis (strain ATCC BAA-935 / AF2122/97).